The sequence spans 933 residues: uncharacterized protein (933 aa).

Over residues methionine 1–histidine 28 the composition is skewed to polar residues. 3 disordered regions span residues methionine 1–aspartate 135, methionine 173–aspartate 194, and alanine 252–glutamine 275. Positions asparagine 29–alanine 47 are enriched in basic and acidic residues. Residues serine 49 to serine 59 are compositionally biased toward low complexity. Composition is skewed to polar residues over residues threonine 87–histidine 101 and asparagine 108–aspartate 135. A compositionally biased stretch (acidic residues) spans methionine 173–arginine 182. The segment covering glutamate 264–glutamine 275 has biased composition (polar residues). 8 WD repeats span residues serine 314–serine 353, glycine 385–cysteine 423, glutamate 425–tryptophan 465, glutamate 467–glutamine 506, alanine 517–lysine 563, alanine 568–threonine 607, alanine 617–serine 657, and proline 665–lysine 710. Serine 722 is subject to Phosphoserine. A disordered region spans residues asparagine 756–leucine 796. Positions alanine 757 to asparagine 768 are enriched in polar residues. The segment covering aspartate 769–glycine 783 has biased composition (basic and acidic residues).

Its subcellular location is the endoplasmic reticulum. It localises to the nucleus. This is an uncharacterized protein from Schizosaccharomyces pombe (strain 972 / ATCC 24843) (Fission yeast).